Here is a 146-residue protein sequence, read N- to C-terminus: Inner membrane protein YdgK (146 aa).

Residues 1–12 (MTTTTPQRIGGW) lie on the Cytoplasmic side of the membrane. Residues 13-33 (LLGPLAWLLVALLSTTLALLL) form a helical membrane-spanning segment. At 34–59 (YTAALSSPQTFQTLGGQALTTQILWG) the chain is on the periplasmic side. The chain crosses the membrane as a helical span at residues 60 to 80 (VSFITAIALWYYTLWLTIAFF). Topologically, residues 81 to 89 (KRRRCVPKH) are cytoplasmic. A helical transmembrane segment spans residues 90–110 (YIIWLLISVLLAVKAFAFSPV). Over 111-112 (ED) the chain is Periplasmic. A helical transmembrane segment spans residues 113 to 133 (GIAVRQLLFTLLATALIVPYF). Over 134–146 (KRSSRVKATFVNP) the chain is Cytoplasmic.

It to Synechocystis PCC 6803 sll0481.

Its subcellular location is the cell inner membrane. In Escherichia coli (strain K12), this protein is Inner membrane protein YdgK (ydgK).